The sequence spans 339 residues: Serine racemase (339 aa).

The ATP site is built by Ser43 and Lys63. The Proton acceptor role is filled by Lys68. The residue at position 68 (Lys68) is an N6-(pyridoxal phosphate)lysine. Thr90 provides a ligand contact to Ca(2+). Catalysis depends on Ser93, which acts as the Proton acceptor. Residue Asn95 participates in pyridoxal 5'-phosphate binding. Cys122 carries the S-nitrosocysteine modification. Position 130 (Tyr130) interacts with ATP. Asp187 serves as a coordination point for Mg(2+). Pyridoxal 5'-phosphate contacts are provided by Gly195, Gly196, and Gly197. Positions 219, 223, and 225 each coordinate Ca(2+). The Mg(2+) site is built by Glu219, Ala223, and Asp225. Mn(2+) is bound by residues Glu219, Ala223, and Asp225. Lys287 contacts ATP. Residue Ser323 participates in pyridoxal 5'-phosphate binding. Asn326 serves as a coordination point for ATP.

Belongs to the serine/threonine dehydratase family. Mg(2+) serves as cofactor. Mn(2+) is required as a cofactor. The cofactor is Ca(2+). Requires pyridoxal 5'-phosphate as cofactor.

The enzyme catalyses L-serine = D-serine. It carries out the reaction L-serine = pyruvate + NH4(+). It catalyses the reaction D-serine = pyruvate + NH4(+). In terms of biological role, catalyzes the synthesis of D-serine from L-serine. Has dehydratase activity towards both L-serine and D-serine. The polypeptide is Serine racemase (Oryza sativa subsp. indica (Rice)).